A 185-amino-acid chain; its full sequence is MNSLFMIFSLGIVGASLMVISTPNPVYSVFWLVIAFVNAAVMFISLGLDYIGLIFIIVYVGAIAILFLFVIMLIQQPNKIDSQDHSHFLPIGLSVIFLFYSLLTNSPKYISNPVIGSRTNIGAIGSHLYTTYYELVLIASLVLLVAMIGAILLAKQPNSPFLYNSHGESLRSRQDLFLQISREHL.

Helical transmembrane passes span 3–23 (SLFMIFSLGIVGASLMVISTP), 28–48 (SVFWLVIAFVNAAVMFISLGL), 54–74 (IFIIVYVGAIAILFLFVIMLI), 87–107 (HFLPIGLSVIFLFYSLLTNSP), and 134–154 (ELVLIASLVLLVAMIGAILLA).

It belongs to the complex I subunit 6 family.

It localises to the mitochondrion membrane. It carries out the reaction a ubiquinone + NADH + 5 H(+)(in) = a ubiquinol + NAD(+) + 4 H(+)(out). In terms of biological role, core subunit of the mitochondrial membrane respiratory chain NADH dehydrogenase (Complex I) that is believed to belong to the minimal assembly required for catalysis. Complex I functions in the transfer of electrons from NADH to the respiratory chain. The immediate electron acceptor for the enzyme is believed to be ubiquinone. The polypeptide is NADH-ubiquinone oxidoreductase chain 6 (ND6) (Sarcophyton glaucum (Toadstool umbrella leather coral)).